We begin with the raw amino-acid sequence, 173 residues long: dCTP deaminase, dUMP-forming (173 aa).

Residues R93 to R98, D111, T119 to E121, Q138, and Y151 contribute to the dCTP site. The Proton donor/acceptor role is filled by E121.

This sequence belongs to the dCTP deaminase family. In terms of assembly, homotrimer.

It carries out the reaction dCTP + 2 H2O = dUMP + NH4(+) + diphosphate. Its pathway is pyrimidine metabolism; dUMP biosynthesis; dUMP from dCTP: step 1/1. Functionally, bifunctional enzyme that catalyzes both the deamination of dCTP to dUTP and the hydrolysis of dUTP to dUMP without releasing the toxic dUTP intermediate. The polypeptide is dCTP deaminase, dUMP-forming (Clostridium botulinum (strain Alaska E43 / Type E3)).